The sequence spans 515 residues: Ribonuclease Y (515 aa).

A helical membrane pass occupies residues 6-26 (LTSFVIITLSLAVGLTGGYYG). Residues 205–290 (TVSVVPLPND…EMVEKARKEI (86 aa)) enclose the KH domain. Residues 331–424 (VLRHSVEVAH…VQAADAISAS (94 aa)) enclose the HD domain.

It belongs to the RNase Y family.

The protein localises to the cell membrane. Functionally, endoribonuclease that initiates mRNA decay. The chain is Ribonuclease Y from Syntrophomonas wolfei subsp. wolfei (strain DSM 2245B / Goettingen).